Here is a 188-residue protein sequence, read N- to C-terminus: MKIPYARLEKGSLLVASPDINQGVFARSVILLCEHSLNGSFGLILNKTLGFEISDDIFTFEKVSNHNIRFCMGGPLQANQMMLLHSCSEIPEQTLEICPSVYLGGDLPFLQEIASSESGPEINLCFGYSGWQAGQLEKEFLSNDWFLAPGNKDYVFYSEPEDLWALVLKDLGGKYASLSTVPDNLLLN.

Belongs to the UPF0301 (AlgH) family.

This Chlamydia pneumoniae (Chlamydophila pneumoniae) protein is UPF0301 protein CPn_0139/CP_0633/CPj0139/CpB0140.